A 288-amino-acid polypeptide reads, in one-letter code: Large ribosomal subunit protein uL2 (288 aa).

Disordered stretches follow at residues 1 to 46 (MAIH…RNVY) and 226 to 288 (MVMN…RGKK). Positions 235–248 (NGGGQGKSKGGGGR) are enriched in gly residues. Over residues 279-288 (HNGRKPRGKK) the composition is skewed to basic residues.

The protein belongs to the universal ribosomal protein uL2 family. In terms of assembly, part of the 50S ribosomal subunit. Forms a bridge to the 30S subunit in the 70S ribosome.

Its function is as follows. One of the primary rRNA binding proteins. Required for association of the 30S and 50S subunits to form the 70S ribosome, for tRNA binding and peptide bond formation. It has been suggested to have peptidyltransferase activity; this is somewhat controversial. Makes several contacts with the 16S rRNA in the 70S ribosome. The chain is Large ribosomal subunit protein uL2 from Opitutus terrae (strain DSM 11246 / JCM 15787 / PB90-1).